A 414-amino-acid chain; its full sequence is Gamma-glutamyl phosphate reductase (414 aa).

Belongs to the gamma-glutamyl phosphate reductase family.

Its subcellular location is the cytoplasm. It catalyses the reaction L-glutamate 5-semialdehyde + phosphate + NADP(+) = L-glutamyl 5-phosphate + NADPH + H(+). The protein operates within amino-acid biosynthesis; L-proline biosynthesis; L-glutamate 5-semialdehyde from L-glutamate: step 2/2. In terms of biological role, catalyzes the NADPH-dependent reduction of L-glutamate 5-phosphate into L-glutamate 5-semialdehyde and phosphate. The product spontaneously undergoes cyclization to form 1-pyrroline-5-carboxylate. The polypeptide is Gamma-glutamyl phosphate reductase (Xanthomonas campestris pv. campestris (strain B100)).